Reading from the N-terminus, the 896-residue chain is C-type lectin domain-containing protein 180 (896 aa).

The first 18 residues, 1 to 18 (MRHLIFTGFVLTLTALEA), serve as a signal peptide directing secretion. Residues 54–178 (PWGDLYQFRA…CESTSPDHHA (125 aa)) form the C-type lectin domain. A glycan (N-linked (GlcNAc...) asparagine) is linked at Asn-133. A disulfide bridge links Cys-154 with Cys-169. N-linked (GlcNAc...) asparagine glycosylation is found at Asn-221 and Asn-235. 4 disordered regions span residues 243 to 264 (STVKFSDSEEETSSEEEESVSK), 354 to 436 (VKQE…LAPE), 492 to 519 (EKLENSKKSEEEKEELAKKDQMSTEEQK), and 557 to 809 (KVKA…TTKP). Acidic residues predominate over residues 250–260 (SEEETSSEEEE). 2 stretches are compositionally biased toward basic and acidic residues: residues 354 to 382 (VKQEKTDEKKVEDKKETLANELNDNKISE) and 395 to 406 (DMPKADIEPPKE). The segment covering 407-426 (EDCDEEGSGSGSGEEDEKDE) has biased composition (acidic residues). Residues 427–436 (SSEKIELAPE) show a composition bias toward basic and acidic residues. 3 stretches are compositionally biased toward basic and acidic residues: residues 575–590 (KSAKEGKAEIKEKVGN), 607–663 (QNRE…ETKL), and 683–692 (EEPKSDKDSE). Low complexity predominate over residues 727-739 (STTTESTTVAVKE). A compositionally biased stretch (basic and acidic residues) spans 740 to 768 (VPVDEIEKIAKLEAKQHTEDEKVTVETKQ). A compositionally biased stretch (low complexity) spans 773-809 (TPAPTTSEKTSTTAAPSTKPAEETTTTTEAPSTTTKP).

The protein localises to the secreted. The protein is C-type lectin domain-containing protein 180 (clec-180) of Caenorhabditis elegans.